The chain runs to 197 residues: ATP-dependent Clp protease proteolytic subunit 1 (197 aa).

The active-site Nucleophile is S96. H121 is an active-site residue.

It belongs to the peptidase S14 family. As to quaternary structure, fourteen ClpP subunits assemble into 2 heptameric rings which stack back to back to give a disk-like structure with a central cavity, resembling the structure of eukaryotic proteasomes.

Its subcellular location is the cytoplasm. The enzyme catalyses Hydrolysis of proteins to small peptides in the presence of ATP and magnesium. alpha-casein is the usual test substrate. In the absence of ATP, only oligopeptides shorter than five residues are hydrolyzed (such as succinyl-Leu-Tyr-|-NHMec, and Leu-Tyr-Leu-|-Tyr-Trp, in which cleavage of the -Tyr-|-Leu- and -Tyr-|-Trp bonds also occurs).. Functionally, cleaves peptides in various proteins in a process that requires ATP hydrolysis. Has a chymotrypsin-like activity. Plays a major role in the degradation of misfolded proteins. The chain is ATP-dependent Clp protease proteolytic subunit 1 from Synechococcus sp. (strain ATCC 27144 / PCC 6301 / SAUG 1402/1) (Anacystis nidulans).